Here is a 40-residue protein sequence, read N- to C-terminus: Sarcotoxin-1D (40 aa).

The protein belongs to the cecropin family.

The protein localises to the secreted. In terms of biological role, sarcotoxins, which are potent bactericidal proteins, are produced in response to injury. They are cytotoxic to both Gram-positive and Gram-negative bacteria. The protein is Sarcotoxin-1D of Sarcophaga peregrina (Flesh fly).